Reading from the N-terminus, the 174-residue chain is UPF0316 protein lwe1794 (174 aa).

3 helical membrane passes run 4 to 24 (GLFIVVTIFVVNILYVTIYTV), 36 to 56 (LAALSSVFEMIIYVVALSLVL), and 62 to 82 (IANVLAYAIGFGVGVIVGMKI).

It belongs to the UPF0316 family.

The protein resides in the cell membrane. This chain is UPF0316 protein lwe1794, found in Listeria welshimeri serovar 6b (strain ATCC 35897 / DSM 20650 / CCUG 15529 / CIP 8149 / NCTC 11857 / SLCC 5334 / V8).